Here is a 300-residue protein sequence, read N- to C-terminus: NAD kinase (300 aa).

Catalysis depends on D75, which acts as the Proton acceptor. NAD(+) is bound by residues 75 to 76, 149 to 150, R177, D179, 190 to 195, A214, and Q248; these read DG, ND, and TAYALS.

It belongs to the NAD kinase family. A divalent metal cation serves as cofactor.

It is found in the cytoplasm. The catalysed reaction is NAD(+) + ATP = ADP + NADP(+) + H(+). In terms of biological role, involved in the regulation of the intracellular balance of NAD and NADP, and is a key enzyme in the biosynthesis of NADP. Catalyzes specifically the phosphorylation on 2'-hydroxyl of the adenosine moiety of NAD to yield NADP. The polypeptide is NAD kinase (Burkholderia cenocepacia (strain ATCC BAA-245 / DSM 16553 / LMG 16656 / NCTC 13227 / J2315 / CF5610) (Burkholderia cepacia (strain J2315))).